We begin with the raw amino-acid sequence, 180 residues long: ATP synthase subunit delta (180 aa).

Belongs to the ATPase delta chain family. As to quaternary structure, F-type ATPases have 2 components, F(1) - the catalytic core - and F(0) - the membrane proton channel. F(1) has five subunits: alpha(3), beta(3), gamma(1), delta(1), epsilon(1). F(0) has three main subunits: a(1), b(2) and c(10-14). The alpha and beta chains form an alternating ring which encloses part of the gamma chain. F(1) is attached to F(0) by a central stalk formed by the gamma and epsilon chains, while a peripheral stalk is formed by the delta and b chains.

It localises to the cell inner membrane. F(1)F(0) ATP synthase produces ATP from ADP in the presence of a proton or sodium gradient. F-type ATPases consist of two structural domains, F(1) containing the extramembraneous catalytic core and F(0) containing the membrane proton channel, linked together by a central stalk and a peripheral stalk. During catalysis, ATP synthesis in the catalytic domain of F(1) is coupled via a rotary mechanism of the central stalk subunits to proton translocation. Functionally, this protein is part of the stalk that links CF(0) to CF(1). It either transmits conformational changes from CF(0) to CF(1) or is implicated in proton conduction. The protein is ATP synthase subunit delta of Legionella pneumophila (strain Paris).